A 241-amino-acid chain; its full sequence is MLTKTMGNFFTEVKDTGLLQSEQLHQYILDTSVFPRESEHLKELRKATESHPMSFMGTSPLAGQLLSFMLKTVKPKKTIEVGVFTGYSLLATALSIPDDGKITAVDIDREAYNVGLALIKKAGVESKISFIVSDAMTLLDDLLADGRYQGSYDFAFVDADKTNYVNYHERLIELVKVGGIIAYDNTLWGGTVALPESEVPDFMKNNWVCVTKLNEILGSDARIDIAHLPVGDGITFCRRVY.

A substrate-binding site is contributed by K14. Residues T58, E80, 82-83, S88, D106, and A135 contribute to the S-adenosyl-L-methionine site; that span reads GV. D158 lines the substrate pocket. D158 provides a ligand contact to a divalent metal cation. D160 contacts S-adenosyl-L-methionine. Residues D184 and N185 each coordinate a divalent metal cation.

The protein belongs to the class I-like SAM-binding methyltransferase superfamily. Cation-dependent O-methyltransferase family. CCoAMT subfamily. The cofactor is a divalent metal cation.

It carries out the reaction (E)-caffeoyl-CoA + S-adenosyl-L-methionine = (E)-feruloyl-CoA + S-adenosyl-L-homocysteine + H(+). Its pathway is aromatic compound metabolism; phenylpropanoid biosynthesis. Functionally, methylates caffeoyl-CoA to feruloyl-CoA and 5-hydroxyferuloyl-CoA to sinapoyl-CoA. Plays a role in the synthesis of feruloylated polysaccharides. Involved in the reinforcement of the plant cell wall. Also involved in the responding to wounding or pathogen challenge by the increased formation of cell wall-bound ferulic acid polymers. This Stellaria longipes (Longstalk starwort) protein is Caffeoyl-CoA O-methyltransferase.